The primary structure comprises 585 residues: Glycerol-3-phosphate dehydrogenase 2 (585 aa).

Position 37 to 65 (37 to 65 (DVVVIGGGVVGSGCALDAATRGLKVALVE)) interacts with FAD.

This sequence belongs to the FAD-dependent glycerol-3-phosphate dehydrogenase family. Requires FAD as cofactor.

It localises to the cytoplasm. It catalyses the reaction a quinone + sn-glycerol 3-phosphate = dihydroxyacetone phosphate + a quinol. The chain is Glycerol-3-phosphate dehydrogenase 2 (glpD2) from Mycobacterium bovis (strain ATCC BAA-935 / AF2122/97).